Here is a 323-residue protein sequence, read N- to C-terminus: RNA polymerase sigma factor SigB (323 aa).

Residues 1–228 (MADAPTRATT…DMPVGSEEEA (228 aa)) form a sufficient to interact with RbpA region. The sigma-70 factor domain-1 stretch occupies residues 25-59 (DLVRVYLNGIGKTALLNAAGEVELAKRIEAGLYAE). Residues 90-160 (LLEANLRLVV…TRGMADQSRT (71 aa)) are sigma-70 factor domain-2. A Polymerase core binding motif is present at residues 114–117 (DLIQ). Residues 169–245 (EQVNKLARIK…DAEAMSAENA (77 aa)) form a sigma-70 factor domain-3 region. A sigma-70 factor domain-4 region spans residues 258–311 (VLATLDEREHQVIRLRFGLDDGQPRTLDQIGKLFGLSRERVRQIERDVMSKLRH). Positions 284 to 303 (LDQIGKLFGLSRERVRQIER) form a DNA-binding region, H-T-H motif.

It belongs to the sigma-70 factor family. In terms of assembly, monomer. Interacts transiently with the RNA polymerase catalytic core formed by RpoA, RpoB, RpoC and RpoZ (2 alpha, 1 beta, 1 beta' and 1 omega subunit) to form the RNA polymerase holoenzyme that can initiate transcription.

Its function is as follows. Sigma factors are initiation factors that promote the attachment of RNA polymerase to specific initiation sites and are then released. A non-essential principal sigma factor that responds to cell envelope stress and hypoxia. The polypeptide is RNA polymerase sigma factor SigB (sigB) (Mycobacterium tuberculosis (strain CDC 1551 / Oshkosh)).